The chain runs to 78 residues: RNA-binding protein Hfq (78 aa).

The 60-residue stretch at 10–69 (DPFLNTLRKEHVPVSIYLVNGIKLQGQIESFDQYVVLLRNTVTQMVYKHAISTVVPARAV) folds into the Sm domain.

The protein belongs to the Hfq family. As to quaternary structure, homohexamer.

Its function is as follows. RNA chaperone that binds small regulatory RNA (sRNAs) and mRNAs to facilitate mRNA translational regulation in response to envelope stress, environmental stress and changes in metabolite concentrations. Also binds with high specificity to tRNAs. In Bordetella petrii (strain ATCC BAA-461 / DSM 12804 / CCUG 43448), this protein is RNA-binding protein Hfq.